The sequence spans 468 residues: Zinc finger protein 672 (468 aa).

C2H2-type zinc fingers lie at residues 15 to 37 (YSCSVCGKSFQYSAVLLRHERAH), 43 to 65 (FRCLECGERCARASDLRVHRWTH), 71 to 93 (YICSECGQSFSHSSLLDLHLGTH), and 100 to 123 (CPCRLCGRRFPHVSALLLHRVRQH). The C2H2-type 5; degenerate zinc-finger motif lies at 129-151 (HRCPLCARSFRQSALPFHLARAH). 9 C2H2-type zinc fingers span residues 167 to 189 (YHCTQCPRAFHSSAGLRNHSRIH), 202 to 224 (HRCGVCGKSFSKSSTLTRHLQRH), 230 to 252 (FKCPECGKGFLESATLVRHQRTH), 258 to 280 (YACNDCGRCFSESSTLLRHQRSH), 286 to 308 (HICATCGKGFGQRYDLVVHQRSH), 314 to 336 (FPCPECGRGFTDRSDLTKHLRTH), 342 to 364 (YHCELCGKRFTCISNLNVHLRNH), 370 to 392 (HKCPECGKSFSVASKLALHRKTH), and 398 to 420 (AECTECGKFFSHGRSLSQHQRSH).

This sequence belongs to the krueppel C2H2-type zinc-finger protein family.

It is found in the nucleus. In terms of biological role, may be involved in transcriptional regulation. In Rattus norvegicus (Rat), this protein is Zinc finger protein 672 (Znf672).